We begin with the raw amino-acid sequence, 175 residues long: Large ribosomal subunit protein uL10 (175 aa).

The protein belongs to the universal ribosomal protein uL10 family. Part of the ribosomal stalk of the 50S ribosomal subunit. The N-terminus interacts with L11 and the large rRNA to form the base of the stalk. The C-terminus forms an elongated spine to which L12 dimers bind in a sequential fashion forming a multimeric L10(L12)X complex.

Its function is as follows. Forms part of the ribosomal stalk, playing a central role in the interaction of the ribosome with GTP-bound translation factors. This Psychrobacter sp. (strain PRwf-1) protein is Large ribosomal subunit protein uL10.